We begin with the raw amino-acid sequence, 235 residues long: MSIHIEAKQGEIADKILLPGDPLRAQYIAETFLEGATCYNRVRGMLGFTGTYKGHRISVQGTGMGVPSISIYVNELIQSYGVQTLIRVGTCGAIQKDVNVRDVILAMSASTDSNMNRLTFRGRDYAPTAHFDLLRTAYEVGVEKGLKLKVGNVFTADMFYNDQPDWETWARYGVLAVEMETAALYTLAAKFGRKALSVLTVSDHILTGEETTAQERQTTFNEMIEVALETAIRVG.

A purine D-ribonucleoside is bound at residue H4. Residues G20, R24, R43, and 87–90 (RVGT) contribute to the phosphate site. Residues 178–180 (EME) and 202–203 (SD) each bind a purine D-ribonucleoside. The active-site Proton donor is the D203.

Belongs to the PNP/UDP phosphorylase family. As to quaternary structure, homohexamer; trimer of homodimers.

The catalysed reaction is a purine D-ribonucleoside + phosphate = a purine nucleobase + alpha-D-ribose 1-phosphate. It carries out the reaction a purine 2'-deoxy-D-ribonucleoside + phosphate = a purine nucleobase + 2-deoxy-alpha-D-ribose 1-phosphate. Catalyzes the reversible phosphorolytic breakdown of the N-glycosidic bond in the beta-(deoxy)ribonucleoside molecules, with the formation of the corresponding free purine bases and pentose-1-phosphate. The sequence is that of Purine nucleoside phosphorylase DeoD-type from Geobacillus sp. (strain WCH70).